Reading from the N-terminus, the 266-residue chain is Thymidylate synthase (266 aa).

Arg24 provides a ligand contact to dUMP. Position 54 (His54) interacts with (6R)-5,10-methylene-5,6,7,8-tetrahydrofolate. 129–130 lines the dUMP pocket; the sequence is RR. Catalysis depends on Cys149, which acts as the Nucleophile. DUMP contacts are provided by residues 169–172, Asn180, and 210–212; these read RSAD and HIY. Asp172 contributes to the (6R)-5,10-methylene-5,6,7,8-tetrahydrofolate binding site. Ala265 contributes to the (6R)-5,10-methylene-5,6,7,8-tetrahydrofolate binding site.

Belongs to the thymidylate synthase family. Bacterial-type ThyA subfamily. As to quaternary structure, homodimer.

The protein localises to the cytoplasm. It carries out the reaction dUMP + (6R)-5,10-methylene-5,6,7,8-tetrahydrofolate = 7,8-dihydrofolate + dTMP. The protein operates within pyrimidine metabolism; dTTP biosynthesis. In terms of biological role, catalyzes the reductive methylation of 2'-deoxyuridine-5'-monophosphate (dUMP) to 2'-deoxythymidine-5'-monophosphate (dTMP) while utilizing 5,10-methylenetetrahydrofolate (mTHF) as the methyl donor and reductant in the reaction, yielding dihydrofolate (DHF) as a by-product. This enzymatic reaction provides an intracellular de novo source of dTMP, an essential precursor for DNA biosynthesis. This Mycobacterium ulcerans (strain Agy99) protein is Thymidylate synthase.